We begin with the raw amino-acid sequence, 65 residues long: Conotoxin VnMLCL-041 (65 aa).

Residues 1–19 form the signal peptide; sequence MLCLPVFIILLLLASPAAP. Residues 20–43 constitute a propeptide that is removed on maturation; the sequence is NPLQTRIQSNLIRAGPEDANIKTD. Lysine amide is present on K64.

It belongs to the conotoxin T superfamily. Expressed by the venom duct.

Its subcellular location is the secreted. The protein is Conotoxin VnMLCL-041 of Conus ventricosus (Mediterranean cone).